We begin with the raw amino-acid sequence, 380 residues long: tRNA-specific 2-thiouridylase MnmA (380 aa).

ATP contacts are provided by residues 10–17 and L36; that span reads AMSGGVDS. Catalysis depends on C106, which acts as the Nucleophile. A disulfide bridge links C106 with C202. G130 contacts ATP. Positions 152–154 are interaction with tRNA; it reads KNQ. The active-site Cysteine persulfide intermediate is the C202. Positions 308-309 are interaction with tRNA; sequence RY.

It belongs to the MnmA/TRMU family.

Its subcellular location is the cytoplasm. The enzyme catalyses S-sulfanyl-L-cysteinyl-[protein] + uridine(34) in tRNA + AH2 + ATP = 2-thiouridine(34) in tRNA + L-cysteinyl-[protein] + A + AMP + diphosphate + H(+). In terms of biological role, catalyzes the 2-thiolation of uridine at the wobble position (U34) of tRNA, leading to the formation of s(2)U34. This is tRNA-specific 2-thiouridylase MnmA from Leptospira biflexa serovar Patoc (strain Patoc 1 / Ames).